The sequence spans 734 residues: MALRFPRFSQGLAQDPTTRRIWFGIATAHDFESHDDITEERLYQNIFASHFGQLAIIFLWTSGNLFHVAWQGNFETWVQDPLHVRPIAHAIWDPHFGQPAVEAFTRGGALGPVNIAYSGVYQWWYTIGLRTNEDLYTGALFLLFLSALSLIGGWLHLQPKWKPRVSWFKNAESRLNHHLSGLFGVSSLAWTGHLVHVAIPASRGENVRWNNFLNVLPHPQGLGPLFTGQWNLYAQNPDSSSHLFGTSQGSGTAILTLLGGFHPQTQSLWLTDMAHHHLAIAILFLIAGHMYRTNFGIGHSIKDLLEAHIPPGGRLGRGHKGLYDTINNSIHFQLGLALASLGVITSLVAQHMYSLPAYAFIAQDFTTQAALYTHHQYIAGFIMTGAFAHGAIFFIRDYNPEQNEDNVLARMLDHKEAIISHLSWASLFLGFHTLGLYVHNDVMLAFGTPEKQILIEPIFAQWIQSAHGKTSYGFDVLLSSTSGPAFNAGRSIWLPGWLNAINENSNSLFLTIGPGDFLVHHAIALGLHTTTLILVKGALDARGSKLMPDKKDFGYSFPCDGPGRGGTCDISAWDAFYLAVFWMLNTIGWVTFYWHWKHITLWQGNVSQFNESSTYLMGWLRDYLWLNSSQLINGYNPFGMNSLSVWAWMFLFGHLVWATGFMFLISWRGYWQELIETLAWAHERTPLANLIRWKDKPVALSIVQARLVGLAHFSVGYIFTYAAFLIASTSGKFG.

8 helical membrane-spanning segments follow: residues 46 to 69 (IFASHFGQLAIIFLWTSGNLFHVA), 135 to 158 (LYTGALFLLFLSALSLIGGWLHLQ), 175 to 199 (LNHHLSGLFGVSSLAWTGHLVHVAI), 273 to 291 (MAHHHLAIAILFLIAGHMY), 330 to 353 (IHFQLGLALASLGVITSLVAQHMY), 369 to 395 (AALYTHHQYIAGFIMTGAFAHGAIFFI), 417 to 439 (AIISHLSWASLFLGFHTLGLYVH), and 517 to 535 (FLVHHAIALGLHTTTLILV). Cys559 and Cys568 together coordinate [4Fe-4S] cluster. The next 2 helical transmembrane spans lie at 575-596 (AFYLAVFWMLNTIGWVTFYWHW) and 643-665 (LSVWAWMFLFGHLVWATGFMFLI). Residues His654, Met662, and Tyr670 each contribute to the chlorophyll a site. Residue Trp671 participates in phylloquinone binding. Residues 707-727 (LVGLAHFSVGYIFTYAAFLIA) traverse the membrane as a helical segment.

This sequence belongs to the PsaA/PsaB family. As to quaternary structure, the PsaA/B heterodimer binds the P700 chlorophyll special pair and subsequent electron acceptors. PSI consists of a core antenna complex that captures photons, and an electron transfer chain that converts photonic excitation into a charge separation. The eukaryotic PSI reaction center is composed of at least 11 subunits. P700 is a chlorophyll a/chlorophyll a' dimer, A0 is one or more chlorophyll a, A1 is one or both phylloquinones and FX is a shared 4Fe-4S iron-sulfur center. serves as cofactor.

It is found in the plastid. Its subcellular location is the chloroplast thylakoid membrane. It catalyses the reaction reduced [plastocyanin] + hnu + oxidized [2Fe-2S]-[ferredoxin] = oxidized [plastocyanin] + reduced [2Fe-2S]-[ferredoxin]. PsaA and PsaB bind P700, the primary electron donor of photosystem I (PSI), as well as the electron acceptors A0, A1 and FX. PSI is a plastocyanin-ferredoxin oxidoreductase, converting photonic excitation into a charge separation, which transfers an electron from the donor P700 chlorophyll pair to the spectroscopically characterized acceptors A0, A1, FX, FA and FB in turn. Oxidized P700 is reduced on the lumenal side of the thylakoid membrane by plastocyanin. This is Photosystem I P700 chlorophyll a apoprotein A2 from Lepidium virginicum (Virginia pepperweed).